The chain runs to 223 residues: Small ribosomal subunit protein uS3 (223 aa).

The 77-residue stretch at 39–115 (IRKYIEKNLA…RVFINIVEIK (77 aa)) folds into the KH type-2 domain.

This sequence belongs to the universal ribosomal protein uS3 family. In terms of assembly, part of the 30S ribosomal subunit. Forms a tight complex with proteins S10 and S14.

Binds the lower part of the 30S subunit head. Binds mRNA in the 70S ribosome, positioning it for translation. The sequence is that of Small ribosomal subunit protein uS3 from Leuconostoc citreum (strain KM20).